A 243-amino-acid polypeptide reads, in one-letter code: Retrotransposon Gag-like protein 6 (243 aa).

The span at 1-12 (MVQPRTSKTESP) shows a compositional bias: polar residues. Residues 1–22 (MVQPRTSKTESPASAPGASAQM) are disordered. Residues 29–69 (LTSLRLTNSALRREASTLRAEKANLTNMLESVMAELTLLRT) adopt a coiled-coil conformation. 2 disordered regions span residues 84 to 105 (SAIT…PEPF) and 218 to 243 (TGSC…GRNL). Residues 85–94 (AITSNGTRPM) show a composition bias toward polar residues.

It belongs to the LDOC1 family. In terms of tissue distribution, widely expressed.

This is Retrotransposon Gag-like protein 6 from Mus musculus (Mouse).